We begin with the raw amino-acid sequence, 161 residues long: Cyclic pyranopterin monophosphate synthase (161 aa).

Residues 78–80 and 116–117 contribute to the substrate site; these read LCH and ME. D131 is a catalytic residue.

It belongs to the MoaC family. Homohexamer; trimer of dimers.

The enzyme catalyses (8S)-3',8-cyclo-7,8-dihydroguanosine 5'-triphosphate = cyclic pyranopterin phosphate + diphosphate. It participates in cofactor biosynthesis; molybdopterin biosynthesis. Catalyzes the conversion of (8S)-3',8-cyclo-7,8-dihydroguanosine 5'-triphosphate to cyclic pyranopterin monophosphate (cPMP). This is Cyclic pyranopterin monophosphate synthase from Bordetella pertussis (strain Tohama I / ATCC BAA-589 / NCTC 13251).